Reading from the N-terminus, the 460-residue chain is MSSTKLEDSLPRRNWSSASELNETQEPFLNPTDYDDEEFLRYLWREYLHPKEYEWVLIAGYIIVFVVALIGNVLVCVAVWKNHHMRTVTNYFIVNLSLADVLVTITCLPATLVVDITETWFFGQSLCKVIPYLQTVSVSVSVLTLSCIALDRWYAICHPLMFKSTAKRARNSIVVIWIVSCIIMIPQAIVMERSSMLPGLANKTTLFTVCDERWGGEVYPKMYHICFFLVTYMAPLCLMVLAYLQIFRKLWCRQIPGTSSVVQRKWKQPQPVSQPRGSGQQSKARISAVAAEIKQIRARRKTARMLMVVLLVFAICYLPISILNVLKRVFGMFTHTEDRETVYAWFTFSHWLVYANSAANPIIYNFLSGKFREEFKAAFSCCLGVHRRQGDRLARGRTSTESRKSLTTQISNFDNVSKLSEHVALTSISTLPAANGAGPLQNWYLQQGVPSSLLSTWLEV.

Residues 1-54 lie on the Extracellular side of the membrane; the sequence is MSSTKLEDSLPRRNWSSASELNETQEPFLNPTDYDDEEFLRYLWREYLHPKEYE. N-linked (GlcNAc...) asparagine glycans are attached at residues N14 and N22. Residues 33–49 are required for response to orexin-A; that stretch reads DYDDEEFLRYLWREYLH. Residues 55–75 form a helical membrane-spanning segment; sequence WVLIAGYIIVFVVALIGNVLV. The Cytoplasmic portion of the chain corresponds to 76–88; the sequence is CVAVWKNHHMRTV. The chain crosses the membrane as a helical span at residues 89–110; that stretch reads TNYFIVNLSLADVLVTITCLPA. At 111-127 the chain is on the extracellular side; the sequence is TLVVDITETWFFGQSLC. A disulfide bridge links C127 with C210. Residues 128–150 traverse the membrane as a helical segment; it reads KVIPYLQTVSVSVSVLTLSCIAL. At 151–170 the chain is on the cytoplasmic side; the sequence is DRWYAICHPLMFKSTAKRAR. A helical membrane pass occupies residues 171 to 191; sequence NSIVVIWIVSCIIMIPQAIVM. Topologically, residues 192–222 are extracellular; it reads ERSSMLPGLANKTTLFTVCDERWGGEVYPKM. N202 is a glycosylation site (N-linked (GlcNAc...) asparagine). The helical transmembrane segment at 223–243 threads the bilayer; it reads YHICFFLVTYMAPLCLMVLAY. At 244–304 the chain is on the cytoplasmic side; that stretch reads LQIFRKLWCR…QIRARRKTAR (61 aa). A helical transmembrane segment spans residues 305 to 326; the sequence is MLMVVLLVFAICYLPISILNVL. The Extracellular segment spans residues 327–342; it reads KRVFGMFTHTEDRETV. The helical transmembrane segment at 343–366 threads the bilayer; that stretch reads YAWFTFSHWLVYANSAANPIIYNF. At 367–460 the chain is on the cytoplasmic side; that stretch reads LSGKFREEFK…SSLLSTWLEV (94 aa).

This sequence belongs to the G-protein coupled receptor 1 family. In terms of tissue distribution, expressed in the brain in the cerebral cortex, septal nuclei, hippocampus, medial thalamic groups, dorsal and median raphe nuclei, and many hypothalamic nuclei including the tuberomammillary nucleus, dorsomedial hypothalamus, paraventricular hypothalamic nucleus, and ventral premammillary nucleus. Not detected in the spleen, lung, liver, skeletal muscle, kidney and testis. Orexin receptor mRNA expression has also been reported in the adrenal gland, enteric nervous system, and pancreas.

Its subcellular location is the cell membrane. Its function is as follows. Nonselective, high-affinity receptor for both orexin-A and orexin-B neuropeptides. Triggers an increase in cytoplasmic Ca(2+) levels in response to orexin-A binding. The polypeptide is Orexin receptor type 2 (Hcrtr2) (Rattus norvegicus (Rat)).